The chain runs to 319 residues: Ankyrin repeat domain-containing protein 1 (319 aa).

The stretch at 55–89 (LGEEQRKSEKVREAELKKKKLEQRSKLENLEDLEI) forms a coiled coil. ANK repeat units follow at residues 152 to 181 (YKRT…QIEF), 185 to 214 (LEST…KISA), 218 to 247 (LLST…DLNA), 251 to 280 (EGDT…DLNV), and 284 to 315 (AGKT…KNSR).

As to quaternary structure, interacts with TTN/titin. Interacts with YBX1. As to expression, expressed in heart, cardiac muscle.

Its subcellular location is the nucleus. Its function is as follows. May play an important role in endothelial cell activation. May act as a nuclear transcription factor that negatively regulates the expression of cardiac genes. The protein is Ankyrin repeat domain-containing protein 1 (Ankrd1) of Rattus norvegicus (Rat).